We begin with the raw amino-acid sequence, 400 residues long: 3-phenylpropionate/cinnamic acid dioxygenase ferredoxin--NAD(+) reductase component (400 aa).

5–36 (TIIIVGGGQAAAMAAASLRQQGFTGELHLFSD) lines the FAD pocket. 146–174 (SVVIIGAGTIGLELAASATQRRCKVTVIE) lines the NAD(+) pocket.

Belongs to the bacterial ring-hydroxylating dioxygenase ferredoxin reductase family. This dioxygenase system consists of four proteins: the two subunits of the hydroxylase component (HcaE and HcaF), a ferredoxin (HcaC) and a ferredoxin reductase (HcaD). The cofactor is FAD.

It carries out the reaction 2 reduced [2Fe-2S]-[ferredoxin] + NAD(+) + H(+) = 2 oxidized [2Fe-2S]-[ferredoxin] + NADH. It participates in aromatic compound metabolism; 3-phenylpropanoate degradation. Functionally, part of the multicomponent 3-phenylpropionate dioxygenase, that converts 3-phenylpropionic acid (PP) and cinnamic acid (CI) into 3-phenylpropionate-dihydrodiol (PP-dihydrodiol) and cinnamic acid-dihydrodiol (CI-dihydrodiol), respectively. This Escherichia coli (strain K12 / MC4100 / BW2952) protein is 3-phenylpropionate/cinnamic acid dioxygenase ferredoxin--NAD(+) reductase component.